The following is a 97-amino-acid chain: Large ribosomal subunit protein bL28 (97 aa).

Positions 1 to 20 (MSRRCELTAKGPQVGHKVSH) are disordered.

It belongs to the bacterial ribosomal protein bL28 family.

The chain is Large ribosomal subunit protein bL28 from Afipia carboxidovorans (strain ATCC 49405 / DSM 1227 / KCTC 32145 / OM5) (Oligotropha carboxidovorans).